Consider the following 345-residue polypeptide: Protein-glutamate methylesterase/protein-glutamine glutaminase 2 (345 aa).

The Response regulatory domain occupies 1–116; sequence MVVDDSAVVR…KQFLVDASDD (116 aa). Asp50 is subject to 4-aspartylphosphate. The CheB-type methylesterase domain occupies 154–345; the sequence is LQTTERVVAL…AREIMAQMAG (192 aa). Active-site residues include Ser166, His192, and Asp288.

The protein belongs to the CheB family. In terms of processing, phosphorylated by CheA. Phosphorylation of the N-terminal regulatory domain activates the methylesterase activity.

Its subcellular location is the cytoplasm. The enzyme catalyses [protein]-L-glutamate 5-O-methyl ester + H2O = L-glutamyl-[protein] + methanol + H(+). It carries out the reaction L-glutaminyl-[protein] + H2O = L-glutamyl-[protein] + NH4(+). In terms of biological role, involved in chemotaxis. Part of a chemotaxis signal transduction system that modulates chemotaxis in response to various stimuli. Catalyzes the demethylation of specific methylglutamate residues introduced into the chemoreceptors (methyl-accepting chemotaxis proteins or MCP) by CheR. Also mediates the irreversible deamidation of specific glutamine residues to glutamic acid. The sequence is that of Protein-glutamate methylesterase/protein-glutamine glutaminase 2 from Albidiferax ferrireducens (strain ATCC BAA-621 / DSM 15236 / T118) (Rhodoferax ferrireducens).